A 218-amino-acid chain; its full sequence is Cell division protein SepF (218 aa).

The segment at 25-115 (DVAASTDNVI…IANRREQYQQ (91 aa)) is disordered. Residues 29 to 43 (STDNVIPRSQQSVRA) show a composition bias toward polar residues. Positions 47–63 (PKQEPRNNHVQQDHQAR) are enriched in basic and acidic residues. Residues 102-115 (STSSIANRREQYQQ) show a composition bias toward polar residues.

Belongs to the SepF family. As to quaternary structure, homodimer. Interacts with FtsZ.

The protein resides in the cytoplasm. In terms of biological role, cell division protein that is part of the divisome complex and is recruited early to the Z-ring. Probably stimulates Z-ring formation, perhaps through the cross-linking of FtsZ protofilaments. Its function overlaps with FtsA. The sequence is that of Cell division protein SepF from Streptococcus pyogenes serotype M5 (strain Manfredo).